A 362-amino-acid polypeptide reads, in one-letter code: Heme A synthase (362 aa).

A run of 5 helical transmembrane segments spans residues 10-30 (LAAIRIWLTVVAGLIALMVLV), 102-122 (VIGMVYLLPFLWFLWRGAVSG), 128-148 (LWLIFGLGALQGAVGWWMVAS), 159-179 (VRLATHLSLALLIFAAIVWTL), and 198-218 (AWGLVGVTFVQLYLGALVAGL). His262 contributes to the heme binding site. Helical transmembrane passes span 266–286 (AYTLFLLGAWHAFDVMRAGAG), 297–317 (LAAILVQAGLGIATLLMVVPI), and 318–338 (SLALLHQGTAIIVLTFAVLQA). Residue His323 participates in heme binding.

This sequence belongs to the COX15/CtaA family. Type 2 subfamily. As to quaternary structure, interacts with CtaB. It depends on heme b as a cofactor.

The protein localises to the cell membrane. The enzyme catalyses Fe(II)-heme o + 2 A + H2O = Fe(II)-heme a + 2 AH2. It participates in porphyrin-containing compound metabolism; heme A biosynthesis; heme A from heme O: step 1/1. In terms of biological role, catalyzes the conversion of heme O to heme A by two successive hydroxylations of the methyl group at C8. The first hydroxylation forms heme I, the second hydroxylation results in an unstable dihydroxymethyl group, which spontaneously dehydrates, resulting in the formyl group of heme A. The polypeptide is Heme A synthase (Bradyrhizobium sp. (strain BTAi1 / ATCC BAA-1182)).